The chain runs to 904 residues: Alpha-actinin-4 (904 aa).

Residues 1–27 are disordered; it reads MVDYHSAGQPYPYGGNGPGPNGDYMAQ. Residues 1 to 259 form an actin-binding region; that stretch reads MVDYHSAGQP…IMTYVSSFYH (259 aa). Calponin-homology (CH) domains follow at residues 43 to 147 and 156 to 262; these read KQQR…LRFA and TSAK…HAFS. Spectrin repeat units lie at residues 286–396, 406–511, 521–632, and 642–745; these read HLME…WLLN, HLAE…ALEK, ELHL…ALQD, and RLRR…EVEN. 2 consecutive EF-hand domains span residues 758–793 and 799–834; these read EQMQ…LGYD and QGDA…ETTD. Residues D771, D773, E782, D812, N814, S816, and S818 each coordinate Ca(2+).

It belongs to the alpha-actinin family. As to quaternary structure, homodimer; antiparallel. Component of the CART complex. May interact with nuclear receptors.

It localises to the nucleus. The protein localises to the cytoplasm. Its subcellular location is the cell junction. It is found in the perinuclear region. F-actin cross-linking protein which is thought to anchor actin to a variety of intracellular structures. This is a bundling protein. Probably involved in vesicular trafficking via its association with the CART complex. Involved in tight junction assembly in epithelial cells. May also function as a transcriptional coactivator, stimulating transcription mediated by nuclear hormone receptors. In Gallus gallus (Chicken), this protein is Alpha-actinin-4.